A 251-amino-acid polypeptide reads, in one-letter code: Ubiquinone/menaquinone biosynthesis C-methyltransferase UbiE (251 aa).

Residues T74, D95, 123-124 (NA), and S140 contribute to the S-adenosyl-L-methionine site.

This sequence belongs to the class I-like SAM-binding methyltransferase superfamily. MenG/UbiE family.

The enzyme catalyses a 2-demethylmenaquinol + S-adenosyl-L-methionine = a menaquinol + S-adenosyl-L-homocysteine + H(+). It catalyses the reaction a 2-methoxy-6-(all-trans-polyprenyl)benzene-1,4-diol + S-adenosyl-L-methionine = a 5-methoxy-2-methyl-3-(all-trans-polyprenyl)benzene-1,4-diol + S-adenosyl-L-homocysteine + H(+). It participates in quinol/quinone metabolism; menaquinone biosynthesis; menaquinol from 1,4-dihydroxy-2-naphthoate: step 2/2. Its pathway is cofactor biosynthesis; ubiquinone biosynthesis. Functionally, methyltransferase required for the conversion of demethylmenaquinol (DMKH2) to menaquinol (MKH2) and the conversion of 2-polyprenyl-6-methoxy-1,4-benzoquinol (DDMQH2) to 2-polyprenyl-3-methyl-6-methoxy-1,4-benzoquinol (DMQH2). In Klebsiella pneumoniae subsp. pneumoniae (strain ATCC 700721 / MGH 78578), this protein is Ubiquinone/menaquinone biosynthesis C-methyltransferase UbiE.